Consider the following 274-residue polypeptide: Bis(5'-nucleosyl)-tetraphosphatase, symmetrical (274 aa).

This sequence belongs to the Ap4A hydrolase family.

The enzyme catalyses P(1),P(4)-bis(5'-adenosyl) tetraphosphate + H2O = 2 ADP + 2 H(+). Functionally, hydrolyzes diadenosine 5',5'''-P1,P4-tetraphosphate to yield ADP. The polypeptide is Bis(5'-nucleosyl)-tetraphosphatase, symmetrical (Shewanella baltica (strain OS223)).